A 1033-amino-acid polypeptide reads, in one-letter code: Translation initiation factor IF-2 (1033 aa).

Positions 49–432 (AFQQGGGNGR…APSVGGVMLP (384 aa)) are disordered. Low complexity predominate over residues 59 to 113 (SAGRPAAPKKAAPRPSAPSPAQAGPSQAAPAAGDRAAAPRPSAAPKAPAAQQPAA). Composition is skewed to pro residues over residues 114–140 (PSAP…PAPA) and 148–164 (PAAP…PSGP). Residues 171-189 (PGAPKPGGARPSGPGQDRG) are compositionally biased toward low complexity. The span at 190 to 201 (QQGGQGRPGGQR) shows a compositional bias: gly residues. Over residues 236–246 (APRPQGGPRPG) the composition is skewed to pro residues. Positions 247–268 (GPGGAPGGGPRPQGPGGQGGGP) are enriched in gly residues. Low complexity predominate over residues 305–314 (MMPQRPAAGP). Positions 318–401 (PGGGGRGPGG…GTQGAFGRPG (84 aa)) are enriched in gly residues. Residues 405 to 414 (RRGRKSKRQR) show a composition bias toward basic residues. The tr-type G domain occupies 526-698 (VRPPVVTVMG…VVLTADASLD (173 aa)). Positions 535–542 (GHVDHGKT) are G1. 535–542 (GHVDHGKT) lines the GTP pocket. The interval 560 to 564 (GITQH) is G2. The G3 stretch occupies residues 585-588 (DTPG). GTP contacts are provided by residues 585 to 589 (DTPGH) and 639 to 642 (NKID). Residues 639 to 642 (NKID) form a G4 region. Residues 675-677 (SAK) are G5.

Belongs to the TRAFAC class translation factor GTPase superfamily. Classic translation factor GTPase family. IF-2 subfamily.

The protein localises to the cytoplasm. In terms of biological role, one of the essential components for the initiation of protein synthesis. Protects formylmethionyl-tRNA from spontaneous hydrolysis and promotes its binding to the 30S ribosomal subunits. Also involved in the hydrolysis of GTP during the formation of the 70S ribosomal complex. This Streptomyces coelicolor (strain ATCC BAA-471 / A3(2) / M145) protein is Translation initiation factor IF-2.